Consider the following 523-residue polypeptide: Mogroside I-A1 synthase (523 aa).

Catalysis depends on H39, which acts as the Proton acceptor. The active-site Charge relay is D136. The UDP-alpha-D-glucose site is built by S311, Q374, W392, N393, S394, E397, D413, and Q414.

Belongs to the UDP-glycosyltransferase family. As to expression, highly expressed in young fruits 15 and 34 days after anthesis (15-DAA and 34-DAA).

The catalysed reaction is mogrol + UDP-alpha-D-glucose = mogroside I-A1 + UDP + H(+). The enzyme catalyses mogroside I-A1 + UDP-alpha-D-glucose = mogroside IIE + UDP + H(+). It carries out the reaction mogroside IE + UDP-alpha-D-glucose = mogroside IIE + UDP + H(+). It catalyses the reaction mogroside II-A1 + UDP-alpha-D-glucose = mogroside IIIX + UDP + H(+). The catalysed reaction is mogroside II-A + UDP-alpha-D-glucose = mogroside III + UDP + H(+). The enzyme catalyses mogroside IIE + UDP-alpha-D-glucose = mogroside III-C3(1-&gt;6) + UDP + H(+). It carries out the reaction mogroside III + UDP-alpha-D-glucose = isomogroside IV + UDP + H(+). It catalyses the reaction mogroside III + UDP-alpha-D-glucose = mogroside IV + UDP + H(+). The catalysed reaction is mogroside IIIX + UDP-alpha-D-glucose = mogroside IVA + UDP + H(+). The enzyme catalyses siamenoside I + UDP-alpha-D-glucose = isomogroside V + UDP + H(+). The protein operates within secondary metabolite biosynthesis; terpenoid biosynthesis. In terms of biological role, UDP-glycosyltransferase involved in the biosynthesis of cucurbitacin and mogroside tetracyclic triterpene natural products (e.g. siamenoside I and mogrosides IV, V and VI). Cucurbitacins have cytotoxic properties and exhibit deterrent taste as a defense barrier against herbivores. Mogrosides are nonsugar highly oxygenated compounds used as high-intensity zero-calorie sweeteners; they also possess pharmacological properties such as regulating immunity, lowering blood sugar and lipid levels, protecting the liver, and acting as antioxidants and antitumor agents. Catalyzes the C24 primary glucosylation of mogrol and mogroside I-E1, and the C3 primary glucosylation of mogroside I-A1, mogroside II-A1 and mogroside II-A. Also supports branching glucosylations of mogroside II-E, mogroside III, mogroside IIIx and siamenoside I. In Siraitia grosvenorii (Monk's fruit), this protein is Mogroside I-A1 synthase.